Here is a 352-residue protein sequence, read N- to C-terminus: Biotin synthase (352 aa).

The region spanning 44–262 is the Radical SAM core domain; that stretch reads NRVQVSTLLS…LAVARIMMPK (219 aa). Residues C59, C63, and C66 each contribute to the [4Fe-4S] cluster site. 4 residues coordinate [2Fe-2S] cluster: C103, C134, C194, and R266.

The protein belongs to the radical SAM superfamily. Biotin synthase family. As to quaternary structure, homodimer. Requires [4Fe-4S] cluster as cofactor. [2Fe-2S] cluster is required as a cofactor.

It carries out the reaction (4R,5S)-dethiobiotin + (sulfur carrier)-SH + 2 reduced [2Fe-2S]-[ferredoxin] + 2 S-adenosyl-L-methionine = (sulfur carrier)-H + biotin + 2 5'-deoxyadenosine + 2 L-methionine + 2 oxidized [2Fe-2S]-[ferredoxin]. It functions in the pathway cofactor biosynthesis; biotin biosynthesis; biotin from 7,8-diaminononanoate: step 2/2. Its function is as follows. Catalyzes the conversion of dethiobiotin (DTB) to biotin by the insertion of a sulfur atom into dethiobiotin via a radical-based mechanism. In Pseudomonas aeruginosa (strain LESB58), this protein is Biotin synthase.